A 216-amino-acid polypeptide reads, in one-letter code: Large ribosomal subunit protein uL3 (216 aa).

Disordered stretches follow at residues 89–108 (QRAS…VGGF) and 139–158 (NTHG…QCQS). Position 157 is an N5-methylglutamine (Gln157).

This sequence belongs to the universal ribosomal protein uL3 family. In terms of assembly, part of the 50S ribosomal subunit. Forms a cluster with proteins L14 and L19. In terms of processing, methylated by PrmB.

Functionally, one of the primary rRNA binding proteins, it binds directly near the 3'-end of the 23S rRNA, where it nucleates assembly of the 50S subunit. The polypeptide is Large ribosomal subunit protein uL3 (Halorhodospira halophila (strain DSM 244 / SL1) (Ectothiorhodospira halophila (strain DSM 244 / SL1))).